A 168-amino-acid polypeptide reads, in one-letter code: Cytochrome c-type biogenesis protein CcmE (168 aa).

At 1–7 (MTRKQRR) the chain is on the cytoplasmic side. Residues 8 to 28 (LMLIGVCGAVLAVALGLVLWA) traverse the membrane as a helical; Signal-anchor for type II membrane protein segment. The Periplasmic portion of the chain corresponds to 29 to 168 (MRGTIVFFRS…SGEKPALRQQ (140 aa)). His-122 and Tyr-126 together coordinate heme. The segment at 134-168 (ALKKQGHWQGEAKHPGGTAPAPQTASGEKPALRQQ) is disordered.

Belongs to the CcmE/CycJ family.

It localises to the cell inner membrane. Functionally, heme chaperone required for the biogenesis of c-type cytochromes. Transiently binds heme delivered by CcmC and transfers the heme to apo-cytochromes in a process facilitated by CcmF and CcmH. This Methylobacterium nodulans (strain LMG 21967 / CNCM I-2342 / ORS 2060) protein is Cytochrome c-type biogenesis protein CcmE.